Here is a 142-residue protein sequence, read N- to C-terminus: Large ribosomal subunit protein uL13 (142 aa).

It belongs to the universal ribosomal protein uL13 family. In terms of assembly, part of the 50S ribosomal subunit.

Its function is as follows. This protein is one of the early assembly proteins of the 50S ribosomal subunit, although it is not seen to bind rRNA by itself. It is important during the early stages of 50S assembly. This is Large ribosomal subunit protein uL13 from Shigella boydii serotype 18 (strain CDC 3083-94 / BS512).